A 527-amino-acid chain; its full sequence is Bifunctional purine biosynthesis protein PurH (527 aa).

One can recognise an MGS-like domain in the interval 1-149 (MTADLLPVRR…KNFARVAVAT (149 aa)).

It belongs to the PurH family.

It carries out the reaction (6R)-10-formyltetrahydrofolate + 5-amino-1-(5-phospho-beta-D-ribosyl)imidazole-4-carboxamide = 5-formamido-1-(5-phospho-D-ribosyl)imidazole-4-carboxamide + (6S)-5,6,7,8-tetrahydrofolate. The catalysed reaction is IMP + H2O = 5-formamido-1-(5-phospho-D-ribosyl)imidazole-4-carboxamide. It functions in the pathway purine metabolism; IMP biosynthesis via de novo pathway; 5-formamido-1-(5-phospho-D-ribosyl)imidazole-4-carboxamide from 5-amino-1-(5-phospho-D-ribosyl)imidazole-4-carboxamide (10-formyl THF route): step 1/1. It participates in purine metabolism; IMP biosynthesis via de novo pathway; IMP from 5-formamido-1-(5-phospho-D-ribosyl)imidazole-4-carboxamide: step 1/1. In Stenotrophomonas maltophilia (strain K279a), this protein is Bifunctional purine biosynthesis protein PurH.